The chain runs to 344 residues: S-adenosylmethionine:tRNA ribosyltransferase-isomerase (344 aa).

The protein belongs to the QueA family. As to quaternary structure, monomer.

Its subcellular location is the cytoplasm. It carries out the reaction 7-aminomethyl-7-carbaguanosine(34) in tRNA + S-adenosyl-L-methionine = epoxyqueuosine(34) in tRNA + adenine + L-methionine + 2 H(+). It participates in tRNA modification; tRNA-queuosine biosynthesis. Transfers and isomerizes the ribose moiety from AdoMet to the 7-aminomethyl group of 7-deazaguanine (preQ1-tRNA) to give epoxyqueuosine (oQ-tRNA). The chain is S-adenosylmethionine:tRNA ribosyltransferase-isomerase from Rhizorhabdus wittichii (strain DSM 6014 / CCUG 31198 / JCM 15750 / NBRC 105917 / EY 4224 / RW1) (Sphingomonas wittichii).